The chain runs to 652 residues: Acetolactate synthase 3, chloroplastic (652 aa).

The segment covering 1 to 20 has biased composition (polar residues); that stretch reads MAAATSSSPISLTAKPSSKS. Residues 1–23 form a disordered region; that stretch reads MAAATSSSPISLTAKPSSKSPLP. The transit peptide at 1-69 directs the protein to the chloroplast; that stretch reads MAAATSSSPI…PEKTDKIKTF (69 aa). Residue E126 coordinates thiamine diphosphate. FAD-binding positions include R228, 334-355, and 377-396; these read HGTV…FGVR and DIDS…VCGD. Residues 469 to 549 are thiamine pyrophosphate binding; it reads QHQMWAAQFY…VKILLLNNQH (81 aa). Positions 520 and 547 each coordinate Mg(2+).

This sequence belongs to the TPP enzyme family. Mg(2+) serves as cofactor. It depends on thiamine diphosphate as a cofactor.

It is found in the plastid. The protein localises to the chloroplast. It catalyses the reaction 2 pyruvate + H(+) = (2S)-2-acetolactate + CO2. The protein operates within amino-acid biosynthesis; L-isoleucine biosynthesis; L-isoleucine from 2-oxobutanoate: step 1/4. It participates in amino-acid biosynthesis; L-valine biosynthesis; L-valine from pyruvate: step 1/4. The sequence is that of Acetolactate synthase 3, chloroplastic from Brassica napus (Rape).